A 72-amino-acid polypeptide reads, in one-letter code: Small ribosomal subunit protein bS18 (72 aa).

This sequence belongs to the bacterial ribosomal protein bS18 family. Part of the 30S ribosomal subunit. Forms a tight heterodimer with protein bS6.

Its function is as follows. Binds as a heterodimer with protein bS6 to the central domain of the 16S rRNA, where it helps stabilize the platform of the 30S subunit. This Francisella philomiragia subsp. philomiragia (strain ATCC 25017 / CCUG 19701 / FSC 153 / O#319-036) protein is Small ribosomal subunit protein bS18.